A 508-amino-acid polypeptide reads, in one-letter code: MQYLQFLSLVVLLLMCHARKSVYRRNSPSLRRLTRNYDWEVDEHGGLKPIINPAKVERATKNCANDSFILGTIMSNYNRHKIPGGQVDVEVEVWVQEITTISDITSDFQLDIYIYETWYDPALNYAFMNPCKYNLSLNSVLLEKLWTPNSCFINSKTADIHKSPFPNIFLMIYANGTVWTNYRLKLQGPCIMDLTKFPFDNVTCSLTFESFNYNTDEVKMDWSVNGVQKMRDKMELADYELVDIHKIRTTEEYPAGYWHELTMSFEFKRRAGWYILQAYLPTYLTICISWISFALGSKAIPARTMLGVNSLLAMTFQFGNIIRNLPRVSYVKAIDVWMLSCMTFVFCSLLELAWVGYLSREEEPTSAKCLQPSAQVAPKPCHPPPVQQNANNSSVHRRQKQPKNEEESALLSLRDNDYGYIPPGFGLNGNVANAMKSFSSSCSCEPTNVVNLMLDEAETIPTSTSSSLSRKQRREILAHKIDSVSVFMFPFLFVLFNIAYWQHYLRGY.

The first 18 residues, 1-18 (MQYLQFLSLVVLLLMCHA), serve as a signal peptide directing secretion. Residues 19–274 (RKSVYRRNSP…FEFKRRAGWY (256 aa)) are Extracellular-facing. 4 N-linked (GlcNAc...) asparagine glycosylation sites follow: N65, N134, N175, and N201. A disulfide bond links C190 and C204. The helical transmembrane segment at 275 to 295 (ILQAYLPTYLTICISWISFAL) threads the bilayer. At 296 to 301 (GSKAIP) the chain is on the cytoplasmic side. A helical transmembrane segment spans residues 302-321 (ARTMLGVNSLLAMTFQFGNI). The Extracellular portion of the chain corresponds to 322 to 335 (IRNLPRVSYVKAID). The chain crosses the membrane as a helical span at residues 336-356 (VWMLSCMTFVFCSLLELAWVG). At 357 to 480 (YLSREEEPTS…KQRREILAHK (124 aa)) the chain is on the cytoplasmic side. The interval 374-407 (AQVAPKPCHPPPVQQNANNSSVHRRQKQPKNEEE) is disordered. A helical membrane pass occupies residues 481–501 (IDSVSVFMFPFLFVLFNIAYW). The Extracellular portion of the chain corresponds to 502 to 508 (QHYLRGY).

Belongs to the ligand-gated ion channel (TC 1.A.9) family. As to expression, expressed in the nervous system, with high expression in cholinergic motor neurons and weak expression in GABAergic motor neurons.

It localises to the presynaptic cell membrane. The protein resides in the cell projection. The protein localises to the axon. It is found in the cytoplasmic vesicle. Its subcellular location is the secretory vesicle. It localises to the synaptic vesicle. Probable component of a ligand-gated anion channel. Negatively regulates synaptic transmission and synaptic vesicle release in response to acetylcholine in cholinergic motor neurons. Role in synaptic vesicle release kinetics may be in association with the ligand-gated ion channel protein acc-4. In Caenorhabditis elegans, this protein is Probable ligand-gated ion channel 46.